We begin with the raw amino-acid sequence, 144 residues long: Putative pre-16S rRNA nuclease (144 aa).

The protein belongs to the YqgF nuclease family.

The protein resides in the cytoplasm. Could be a nuclease involved in processing of the 5'-end of pre-16S rRNA. The protein is Putative pre-16S rRNA nuclease of Oleidesulfovibrio alaskensis (strain ATCC BAA-1058 / DSM 17464 / G20) (Desulfovibrio alaskensis).